The chain runs to 679 residues: Protein hook (679 aa).

A Calponin-homology (CH) domain is found at 5 to 123; that stretch reads NGMYYSLLEW…RLLQLVLGCA (119 aa). A coiled-coil region spans residues 140-627; sequence EEELQANIMR…SKTKMSTMEE (488 aa).

The protein belongs to the hook family. Homodimer. Interacts with microtubules via its N-terminus.

Its subcellular location is the cytoplasm. The protein localises to the cytoskeleton. It is found in the endosome. The protein resides in the synapse. Functionally, involved in endocytic trafficking by stabilizing organelles of the endocytic pathway. Probably acts as a cytoskeletal linker protein required to tether endosome vesicles to the cytoskeleton. Involved in modulation of endocytosis at stages required for down-regulation of membrane proteins that control synapse size. Not involved in synaptic vesicle recycling. Required in R7 cells for boss endocytosis into multivesicular bodies (MVBs). Has a role in regulating adult longevity. In Drosophila mojavensis (Fruit fly), this protein is Protein hook.